Consider the following 159-residue polypeptide: 3-hydroxyacyl-[acyl-carrier-protein] dehydratase FabZ (159 aa).

The active site involves His-62.

This sequence belongs to the thioester dehydratase family. FabZ subfamily.

The protein localises to the cytoplasm. It catalyses the reaction a (3R)-hydroxyacyl-[ACP] = a (2E)-enoyl-[ACP] + H2O. Involved in unsaturated fatty acids biosynthesis. Catalyzes the dehydration of short chain beta-hydroxyacyl-ACPs and long chain saturated and unsaturated beta-hydroxyacyl-ACPs. The protein is 3-hydroxyacyl-[acyl-carrier-protein] dehydratase FabZ of Methylobacterium nodulans (strain LMG 21967 / CNCM I-2342 / ORS 2060).